Reading from the N-terminus, the 945-residue chain is Isoleucine--tRNA ligase (945 aa).

Positions 66–76 (PYANGDIHLGH) match the 'HIGH' region motif. Glu-581 contributes to the L-isoleucyl-5'-AMP binding site. Positions 622 to 626 (KMSKS) match the 'KMSKS' region motif. Position 625 (Lys-625) interacts with ATP. Residues Cys-908, Cys-911, Cys-928, and Cys-931 each coordinate Zn(2+).

It belongs to the class-I aminoacyl-tRNA synthetase family. IleS type 1 subfamily. As to quaternary structure, monomer. It depends on Zn(2+) as a cofactor.

It is found in the cytoplasm. The catalysed reaction is tRNA(Ile) + L-isoleucine + ATP = L-isoleucyl-tRNA(Ile) + AMP + diphosphate. Its function is as follows. Catalyzes the attachment of isoleucine to tRNA(Ile). As IleRS can inadvertently accommodate and process structurally similar amino acids such as valine, to avoid such errors it has two additional distinct tRNA(Ile)-dependent editing activities. One activity is designated as 'pretransfer' editing and involves the hydrolysis of activated Val-AMP. The other activity is designated 'posttransfer' editing and involves deacylation of mischarged Val-tRNA(Ile). The chain is Isoleucine--tRNA ligase from Burkholderia cenocepacia (strain ATCC BAA-245 / DSM 16553 / LMG 16656 / NCTC 13227 / J2315 / CF5610) (Burkholderia cepacia (strain J2315)).